The sequence spans 540 residues: 2,3-bisphosphoglycerate-independent phosphoglycerate mutase (540 aa).

The Mn(2+) site is built by Asp24 and Ser74. The active-site Phosphoserine intermediate is Ser74. Substrate-binding positions include His135, Arg165–Asp166, Arg197, Arg203, Arg268–Arg271, and Lys341. Asp408, His412, Asp449, His450, and His467 together coordinate Mn(2+).

Belongs to the BPG-independent phosphoglycerate mutase family. In terms of assembly, monomer. Requires Mn(2+) as cofactor.

The enzyme catalyses (2R)-2-phosphoglycerate = (2R)-3-phosphoglycerate. Its pathway is carbohydrate degradation; glycolysis; pyruvate from D-glyceraldehyde 3-phosphate: step 3/5. Its function is as follows. Catalyzes the interconversion of 2-phosphoglycerate and 3-phosphoglycerate. This is 2,3-bisphosphoglycerate-independent phosphoglycerate mutase from Prochlorococcus marinus (strain MIT 9313).